The sequence spans 688 residues: MQPTRSVRPFKVVSDYSPSGDQPTAIAELAGRVNAGEPDVVLLGATGTGKSATAAWLIEKVQRPTLILAHNKTLAAQLATEFRELMPDNAVEYFVSYYDYYQPEAYVPQTDTFIEKDSSVNAEVERLRHSTTNSLLSRRDVVVVSTVSCIYGLGQPEQYMNAMVALQVGMQINRDTLIRKFVSMQYQRNDVDFSRGNFRVRGDTIEIIPMYEELAIRIEMFGDEIEALYQLHPLTGDVVRKMDAVSVFPGSHYVAETEVMQRAIGTIQQELEERLAVLEREGKLLEAQRLRMRTNFDIEMMQQIGFCSGIENYSRHIDGRDAGEAPHCLLDYFPDDFLVVIDESHVTVPQIGAMFEGDSSRKRTLVEHGFRLPSALDNRPLKWNEFTERVPQTVYMSATPGKYELGMGDGVVEQIIRPTGLIDPAIVVKPTKGQIDDLLEQIRIRVEKDERILVTTLTKKMAEELTDYFAEAGVRVRYLHSDVDTLRRVELLSELRAGVYDVLVGINLLREGLDLPEVSLVAILDADKEGFLRSSTSLIQTIGRAARNVSGEVHMYADVLTDSMKRAIEETDRRREKQVAYNTEHGIDPTPLRKRIADITEILAREGEDTKKMLEGRGGGKRSPTPNLRREGKAAAGANELETIISDLNDQMLQAAGELKFELAARLRDELGDLKRELRQMEKAGHLS.

In terms of domain architecture, Helicase ATP-binding spans Gly31–Arg188. Gly44 to Ser51 contacts ATP. Residues Tyr97 to Val120 carry the Beta-hairpin motif. The region spanning Gln434–Ile587 is the Helicase C-terminal domain. Positions Gly607–Gly632 are disordered. The UVR domain maps to Glu642–Glu677.

It belongs to the UvrB family. As to quaternary structure, forms a heterotetramer with UvrA during the search for lesions. Interacts with UvrC in an incision complex.

The protein resides in the cytoplasm. Functionally, the UvrABC repair system catalyzes the recognition and processing of DNA lesions. A damage recognition complex composed of 2 UvrA and 2 UvrB subunits scans DNA for abnormalities. Upon binding of the UvrA(2)B(2) complex to a putative damaged site, the DNA wraps around one UvrB monomer. DNA wrap is dependent on ATP binding by UvrB and probably causes local melting of the DNA helix, facilitating insertion of UvrB beta-hairpin between the DNA strands. Then UvrB probes one DNA strand for the presence of a lesion. If a lesion is found the UvrA subunits dissociate and the UvrB-DNA preincision complex is formed. This complex is subsequently bound by UvrC and the second UvrB is released. If no lesion is found, the DNA wraps around the other UvrB subunit that will check the other stand for damage. The polypeptide is UvrABC system protein B (Clavibacter sepedonicus (Clavibacter michiganensis subsp. sepedonicus)).